The primary structure comprises 252 residues: Thiamine thiazole synthase (252 aa).

Residues Ser35, 54–55, Gly62, Val126, and 152–154 each bind NAD(+); these read EK and HVD. Fe cation-binding residues include Asp154 and His169. Met217 contacts NAD(+). Residue Arg227 participates in glycine binding.

The protein belongs to the THI4 family. As to quaternary structure, homooctamer; tetramer of dimers. Requires Fe(2+) as cofactor.

It carries out the reaction hydrogen sulfide + glycine + NAD(+) = ADP-5-ethyl-4-methylthiazole-2-carboxylate + nicotinamide + 3 H2O + H(+). The protein operates within cofactor biosynthesis; thiamine diphosphate biosynthesis. Its function is as follows. Involved in the biosynthesis of the thiazole moiety of thiamine. Catalyzes the conversion of NAD and glycine to adenosine diphosphate 5-(2-hydroxyethyl)-4-methylthiazole-2-carboxylate (ADT), an adenylated thiazole intermediate, using free sulfide as a source of sulfur. This Pyrococcus abyssi (strain GE5 / Orsay) protein is Thiamine thiazole synthase.